The chain runs to 232 residues: uncharacterized protein (232 aa).

A disordered region spans residues 1-46 (MNAHNMRGPPGDLAKVVPGSRSGWNEGSRCRQADKGDGQCRNGGRD). A compositionally biased stretch (basic and acidic residues) spans 28 to 46 (SRCRQADKGDGQCRNGGRD).

This is an uncharacterized protein from Rhizobium meliloti (Ensifer meliloti).